The following is a 41-amino-acid chain: Conotoxin Ac4.2 (41 aa).

Residues 1–11 constitute a propeptide that is removed on maturation; the sequence is FDGRNAAVNER. Position 13 is a 4-hydroxyproline (proline 13). 2 O-linked (HexNAc...) threonine glycosylation sites follow: threonine 18 and threonine 20. 4-hydroxyproline is present on residues proline 29 and proline 33. Position 40 is a cysteine amide (cysteine 40).

The protein belongs to the conotoxin A superfamily. Contains 3 disulfide bonds. In terms of tissue distribution, expressed by the venom duct.

The protein localises to the secreted. Its function is as follows. Probable neurotoxin with ion channel inhibitor activity. The polypeptide is Conotoxin Ac4.2 (Conus achatinus (Little frog cone)).